A 249-amino-acid polypeptide reads, in one-letter code: Adenosylcobinamide-GDP ribazoletransferase (249 aa).

6 consecutive transmembrane segments (helical) span residues 32 to 52 (MVAFPLAGTLIGGLVAATWFG), 53 to 73 (ATWLWGTTTGSLCAILTWGAI), 107 to 127 (IGTMGAIALISILLLKWLFVL), 136 to 156 (ALIVAPTLGRWVDIIGIFWFP), 190 to 210 (LLWWWAGLIFAVVIVATIIIA), and 224 to 244 (TYGALCEIAEMLVLAVVAALV).

Belongs to the CobS family. Mg(2+) serves as cofactor.

The protein resides in the cell membrane. The enzyme catalyses alpha-ribazole + adenosylcob(III)inamide-GDP = adenosylcob(III)alamin + GMP + H(+). It catalyses the reaction alpha-ribazole 5'-phosphate + adenosylcob(III)inamide-GDP = adenosylcob(III)alamin 5'-phosphate + GMP + H(+). It participates in cofactor biosynthesis; adenosylcobalamin biosynthesis; adenosylcobalamin from cob(II)yrinate a,c-diamide: step 7/7. Joins adenosylcobinamide-GDP and alpha-ribazole to generate adenosylcobalamin (Ado-cobalamin). Also synthesizes adenosylcobalamin 5'-phosphate from adenosylcobinamide-GDP and alpha-ribazole 5'-phosphate. This is Adenosylcobinamide-GDP ribazoletransferase from Herpetosiphon aurantiacus (strain ATCC 23779 / DSM 785 / 114-95).